An 81-amino-acid polypeptide reads, in one-letter code: Exodeoxyribonuclease 7 small subunit (81 aa).

The tract at residues 59–81 (KLVDKDGNEKTLDPQNASAPEEE) is disordered. Residues 60-70 (LVDKDGNEKTL) show a composition bias toward basic and acidic residues. Over residues 71-81 (DPQNASAPEEE) the composition is skewed to polar residues.

This sequence belongs to the XseB family. Heterooligomer composed of large and small subunits.

It is found in the cytoplasm. It catalyses the reaction Exonucleolytic cleavage in either 5'- to 3'- or 3'- to 5'-direction to yield nucleoside 5'-phosphates.. Functionally, bidirectionally degrades single-stranded DNA into large acid-insoluble oligonucleotides, which are then degraded further into small acid-soluble oligonucleotides. This chain is Exodeoxyribonuclease 7 small subunit, found in Lactobacillus gasseri (strain ATCC 33323 / DSM 20243 / BCRC 14619 / CIP 102991 / JCM 1131 / KCTC 3163 / NCIMB 11718 / NCTC 13722 / AM63).